Consider the following 140-residue polypeptide: Large ribosomal subunit protein uL16 (140 aa).

It belongs to the universal ribosomal protein uL16 family. In terms of assembly, part of the 50S ribosomal subunit.

In terms of biological role, binds 23S rRNA and is also seen to make contacts with the A and possibly P site tRNAs. This chain is Large ribosomal subunit protein uL16, found in Malacoplasma penetrans (strain HF-2) (Mycoplasma penetrans).